Here is a 213-residue protein sequence, read N- to C-terminus: tRNA (guanine-N(7)-)-methyltransferase (213 aa).

4 residues coordinate S-adenosyl-L-methionine: E44, E69, N96, and D118. D118 is a catalytic residue. Position 122 (K122) interacts with substrate. The interaction with RNA stretch occupies residues 124–129 (RHEKRR). Substrate contacts are provided by residues D154 and 191–194 (TEYE).

It belongs to the class I-like SAM-binding methyltransferase superfamily. TrmB family.

It carries out the reaction guanosine(46) in tRNA + S-adenosyl-L-methionine = N(7)-methylguanosine(46) in tRNA + S-adenosyl-L-homocysteine. Its pathway is tRNA modification; N(7)-methylguanine-tRNA biosynthesis. In terms of biological role, catalyzes the formation of N(7)-methylguanine at position 46 (m7G46) in tRNA. The protein is tRNA (guanine-N(7)-)-methyltransferase of Oceanobacillus iheyensis (strain DSM 14371 / CIP 107618 / JCM 11309 / KCTC 3954 / HTE831).